The following is a 324-amino-acid chain: Olfactory receptor 5T17 (324 aa).

At 1 to 37 (MPRTPSYTNTKTTQVNNVTEITVFILLGFTDDVDMNI) the chain is on the extracellular side. Asn17 carries N-linked (GlcNAc...) asparagine glycosylation. A helical transmembrane segment spans residues 38–58 (FLFILFLAIYVVTLIGNLGLV). Residues 59 to 66 (VLVIEDSR) lie on the Cytoplasmic side of the membrane. The helical transmembrane segment at 67–87 (LHNPMYYFLTVLSSLDACFSS) threads the bilayer. The Extracellular portion of the chain corresponds to 88-111 (VLTPKMLVNFLSKNKSISFAGCAT). Asn101 is a glycosylation site (N-linked (GlcNAc...) asparagine). A disulfide bridge connects residues Cys109 and Cys201. Residues 112–132 (QMLLFVTFGTTECFLLAAMAY) form a helical membrane-spanning segment. Residues 133-145 (DRYLAIYSPLLYA) lie on the Cytoplasmic side of the membrane. A helical transmembrane segment spans residues 146–166 (VRMSPRVYVPLIIASYTGGIL). Topologically, residues 167-208 (HATIHTVATFSLSFCGSNEIRHVFCDIPPLLALSCSDTHLNQ) are extracellular. Residues 209–229 (LLLFYCAGSIELITILIVLVS) form a helical membrane-spanning segment. Residues 230–249 (YGFVLLAILKINSAEGRRKI) lie on the Cytoplasmic side of the membrane. The chain crosses the membrane as a helical span at residues 250-270 (FSTCGAHLTGVSIFHGTILFM). Residues 271-283 (YVRPSSNYTLEQD) lie on the Extracellular side of the membrane. The N-linked (GlcNAc...) asparagine glycan is linked to Asn277. A helical transmembrane segment spans residues 284–304 (MVVSTFYTIVIPMLNPIIYSL). At 305–324 (RNKDVKEAMRKLLKRKLVHE) the chain is on the cytoplasmic side.

The protein belongs to the G-protein coupled receptor 1 family.

It is found in the cell membrane. Its function is as follows. Potential odorant receptor. The sequence is that of Olfactory receptor 5T17 from Mus musculus (Mouse).